Reading from the N-terminus, the 620-residue chain is Glutathione-regulated potassium-efflux system protein KefC (620 aa).

The next 12 helical transmembrane spans lie at 4–24 (HTLL…PIAV), 26–46 (LGLG…PWGL), 54–74 (SILH…GLEL), 90–110 (GALQ…FLGL), 114–134 (VAEL…MQAM), 149–169 (FAVL…IPLL), 178–198 (LGAF…VVVL), 218–238 (VFSA…EEVG), 270–290 (GLLL…GTLV), 294–314 (LRIL…LWLV), 327–347 (WFAV…GAAQ), and 359–379 (ALTL…VLLT). The region spanning 399–518 (QPRVIVAGFG…AGVAMPERET (120 aa)) is the RCK N-terminal domain. Positions 599-620 (QGTAEGKHSGEVADEPEVKPSI) are disordered.

The protein belongs to the monovalent cation:proton antiporter 2 (CPA2) transporter (TC 2.A.37) family. KefC subfamily. In terms of assembly, homodimer. Interacts with the regulatory subunit KefF.

Its subcellular location is the cell inner membrane. Its function is as follows. Pore-forming subunit of a potassium efflux system that confers protection against electrophiles. Catalyzes K(+)/H(+) antiport. In Salmonella paratyphi B (strain ATCC BAA-1250 / SPB7), this protein is Glutathione-regulated potassium-efflux system protein KefC.